The following is a 292-amino-acid chain: Probable deoxyhypusine synthase (292 aa).

The Nucleophile role is filled by Lys267.

This sequence belongs to the deoxyhypusine synthase family. It depends on NAD(+) as a cofactor.

The catalysed reaction is [eIF5A protein]-L-lysine + spermidine = [eIF5A protein]-deoxyhypusine + propane-1,3-diamine. It participates in protein modification; eIF5A hypusination. Catalyzes the NAD-dependent oxidative cleavage of spermidine and the subsequent transfer of the butylamine moiety of spermidine to the epsilon-amino group of a specific lysine residue of the eIF-5A precursor protein to form the intermediate deoxyhypusine residue. The chain is Probable deoxyhypusine synthase (dys) from Pyrobaculum aerophilum (strain ATCC 51768 / DSM 7523 / JCM 9630 / CIP 104966 / NBRC 100827 / IM2).